Reading from the N-terminus, the 3259-residue chain is Golgin subfamily B member 1 (3259 aa).

Met1 carries the post-translational modification N-acetylmethionine. Topologically, residues 1–3235 are cytoplasmic; the sequence is MLSRLSGLAN…LRSLCHSRTR (3235 aa). 4 positions are modified to phosphoserine: Ser6, Ser17, Ser138, and Ser528. A coiled-coil region spans residues 48-593; sequence EDVQERLAYA…RAEEADHEVL (546 aa). A disordered region spans residues 119–142; that stretch reads GTVLPTEPQSEEQLSKHDKSSTEE. Basic and acidic residues predominate over residues 131–142; the sequence is QLSKHDKSSTEE. The interval 624-652 is disordered; that stretch reads LMPNEESSLPAVEKEQASTEHQSRTSEEI. Residues 635–650 are compositionally biased toward basic and acidic residues; the sequence is VEKEQASTEHQSRTSE. Residue Ser653 is modified to Phosphoserine. 3 coiled-coil regions span residues 677–1028, 1062–1245, and 1301–1779; these read DIGQ…KEIP, LKQT…ESID, and GTSV…TEKH. Residues 944–963 form a disordered region; sequence AKKEQVEEDNEVSSGLKQNY. Residues 1747 to 1763 are compositionally biased toward basic and acidic residues; that stretch reads SEKDSLSEEVQDLKHQI. The interval 1747-1829 is disordered; that stretch reads SEKDSLSEEV…SANPAVSKDF (83 aa). Composition is skewed to polar residues over residues 1782–1794 and 1802–1820; these read QTNV…QSIP and SLSM…SAKS. A coiled-coil region spans residues 1828-3185; it reads DFSSHDEINN…EQIRRLEHSE (1358 aa). Residues Ser2216, Ser2735, Ser2872, and Ser2884 each carry the phosphoserine modification. The disordered stretch occupies residues 2856-2876; the sequence is RKSEEGKQRSAAQPSTSPAEV. The span at 2865 to 2875 shows a compositional bias: polar residues; it reads SAAQPSTSPAE. The interval 2998–3021 is disordered; it reads TQPLKVQYQRQASPETSASPDGSQ. At Ser3037 the chain carries Phosphoserine. Residues 3107 to 3140 form a disordered region; sequence IDVAPGAPQEKNGVHRKSDPEELREPQQSFSEAQ. Basic and acidic residues predominate over residues 3118 to 3131; the sequence is NGVHRKSDPEELRE. Residues 3236–3256 form a helical membrane-spanning segment; the sequence is VPLLAAIYFLMIHVLLILCFT. The Lumenal portion of the chain corresponds to 3257–3259; that stretch reads GHL.

Homodimer; disulfide-linked. Interacts with PLK3.

The protein localises to the golgi apparatus membrane. In terms of biological role, may participate in forming intercisternal cross-bridges of the Golgi complex. This Homo sapiens (Human) protein is Golgin subfamily B member 1 (GOLGB1).